Consider the following 105-residue polypeptide: Phosphoribosyl-ATP pyrophosphatase (105 aa).

This sequence belongs to the PRA-PH family.

It localises to the cytoplasm. It carries out the reaction 1-(5-phospho-beta-D-ribosyl)-ATP + H2O = 1-(5-phospho-beta-D-ribosyl)-5'-AMP + diphosphate + H(+). It functions in the pathway amino-acid biosynthesis; L-histidine biosynthesis; L-histidine from 5-phospho-alpha-D-ribose 1-diphosphate: step 2/9. The polypeptide is Phosphoribosyl-ATP pyrophosphatase (Vesicomyosocius okutanii subsp. Calyptogena okutanii (strain HA)).